Here is a 332-residue protein sequence, read N- to C-terminus: Glycerol-3-phosphate dehydrogenase [NAD(P)+] (332 aa).

NADPH contacts are provided by S11, W12, R32, R33, and K106. 2 residues coordinate sn-glycerol 3-phosphate: K106 and G136. A140 is an NADPH binding site. K191, D244, S254, R255, and N256 together coordinate sn-glycerol 3-phosphate. K191 functions as the Proton acceptor in the catalytic mechanism. Residue R255 coordinates NADPH. NADPH contacts are provided by V280 and E282.

This sequence belongs to the NAD-dependent glycerol-3-phosphate dehydrogenase family.

It localises to the cytoplasm. The enzyme catalyses sn-glycerol 3-phosphate + NAD(+) = dihydroxyacetone phosphate + NADH + H(+). The catalysed reaction is sn-glycerol 3-phosphate + NADP(+) = dihydroxyacetone phosphate + NADPH + H(+). It functions in the pathway membrane lipid metabolism; glycerophospholipid metabolism. In terms of biological role, catalyzes the reduction of the glycolytic intermediate dihydroxyacetone phosphate (DHAP) to sn-glycerol 3-phosphate (G3P), the key precursor for phospholipid synthesis. This Corynebacterium glutamicum (strain R) protein is Glycerol-3-phosphate dehydrogenase [NAD(P)+].